The chain runs to 128 residues: DELTA-urthionin-Uf1a (128 aa).

The signal sequence occupies residues M1 to A24. Disulfide bonds link C27-C64, C28-C56, and C40-C50. Positions L67–A128 are cleaved as a propeptide — acidic domain.

This sequence belongs to the plant thionin (TC 1.C.44) family. Expressed in trichomes, that are stiff epidermal hairs located on the surface of petioles and leaves.

The protein resides in the secreted. Its function is as follows. Plant defense protein that causes pain by probable disruption of cell membranes. Shows cytotoxic activity against the neuroblastoma cell line SH-SY5Y and slightly weaker activity against several non-neuronal cell lines. In vivo, intraplantar injection into mice causes several nocifensive responses, along with swelling and redness. In Urtica ferox (Tree nettle), this protein is DELTA-urthionin-Uf1a.